A 162-amino-acid polypeptide reads, in one-letter code: MKMFVPAVVFAASASAWAVNGDNAQPLEKIAPYPQAEKGMKRQVITLTPQQDESTLKVELLIGQTLNVDCNQHRLGGKLKTKTLEGWGYDYYVFDNVTSQVSTMMACPEGKKEPKFVTAWLGQDGMLRYNSKLPIVVYTPANVDVKYRIWKADANVQNAVAR.

Positions 1–18 (MKMFVPAVVFAASASAWA) are cleaved as a signal peptide. Residues Cys70 and Cys107 are joined by a disulfide bond.

It belongs to the protease inhibitor I11 (ecotin) family. In terms of assembly, homodimer.

The protein resides in the periplasm. In terms of biological role, general inhibitor of pancreatic serine proteases: inhibits chymotrypsin, trypsin, elastases, factor X, kallikrein as well as a variety of other proteases. The protein is Ecotin of Salmonella arizonae (strain ATCC BAA-731 / CDC346-86 / RSK2980).